The chain runs to 282 residues: MADGEICRCQVTDPPLIRHEDYDCTARMVQKRIEIGPLGVLLNLNMLFHMSRVRHIDVYPYLNNIMSISVSLDVPVSSGVGVGRVRVLIFTTSRERVGIFHGWQVVPGCFLNAPCYSGVDVLSDELCEANITNTSVSSVAMFNGSYRPEDVWILLLTSSTCYGYHDVVVDIEQCTLPSNIDGCVCCSGVCYFNDNHCFCGRRDSNPFNPPCFQFIKDCNELYGTNETKQFICDLVGDDNLDSVNTLTKEGWRRFCDVLWNTTYGDVESRTFARFLWFVFYHD.

Its function is as follows. Involved in efficient vector transmission. Might slightly enhance symptom expression and increase root-specific silencing suppression (Potential). This chain is 31 kDa protein (p31), found in Beet necrotic yellow vein virus (isolate Japan/S) (BNYVV).